A 126-amino-acid polypeptide reads, in one-letter code: Small ribosomal subunit protein uS13 (126 aa).

Residues 95 to 126 (GLPVRGQQTRTNARTRKGKRKTVGGTKKAKAK) form a disordered region. Positions 107 to 126 (ARTRKGKRKTVGGTKKAKAK) are enriched in basic residues.

This sequence belongs to the universal ribosomal protein uS13 family. Part of the 30S ribosomal subunit. Forms a loose heterodimer with protein S19. Forms two bridges to the 50S subunit in the 70S ribosome.

Its function is as follows. Located at the top of the head of the 30S subunit, it contacts several helices of the 16S rRNA. In the 70S ribosome it contacts the 23S rRNA (bridge B1a) and protein L5 of the 50S subunit (bridge B1b), connecting the 2 subunits; these bridges are implicated in subunit movement. Contacts the tRNAs in the A and P-sites. This is Small ribosomal subunit protein uS13 from Aquifex aeolicus (strain VF5).